The following is a 453-amino-acid chain: Aldehyde dehydrogenase, dimeric NADP-preferring (453 aa).

N-acetylserine is present on Ser-2. Lys-178 is modified (N6-acetyllysine). Residue 188-193 (GSTAVG) coordinates NAD(+). Position 194 is an N6-acetyllysine (Lys-194). Residues Glu-210 and Cys-244 contribute to the active site.

This sequence belongs to the aldehyde dehydrogenase family. Homodimer.

It localises to the cytoplasm. The enzyme catalyses an aldehyde + NAD(+) + H2O = a carboxylate + NADH + 2 H(+). The catalysed reaction is octanal + NAD(+) + H2O = octanoate + NADH + 2 H(+). ALDHs play a major role in the detoxification of alcohol-derived acetaldehyde. They are involved in the metabolism of corticosteroids, biogenic amines, neurotransmitters, and lipid peroxidation. Oxidizes medium and long chain aldehydes into non-toxic fatty acids. Preferentially oxidizes aromatic aldehyde substrates. Comprises about 50 percent of corneal epithelial soluble proteins. May play a role in preventing corneal damage caused by ultraviolet light. The protein is Aldehyde dehydrogenase, dimeric NADP-preferring (Aldh3a1) of Rattus norvegicus (Rat).